We begin with the raw amino-acid sequence, 356 residues long: Holliday junction branch migration complex subunit RuvB (356 aa).

The segment at 4–190 is large ATPase domain (RuvB-L); the sequence is TDKLAAERII…FGIVARLEFY (187 aa). ATP contacts are provided by residues L29, R30, G71, K74, T75, T76, 137-139, R180, Y190, and R227; that span reads EDY. T75 lines the Mg(2+) pocket. Residues 191 to 261 are small ATPAse domain (RuvB-S); that stretch reads DAEQLSRIVR…VADAALAMLD (71 aa). A head domain (RuvB-H) region spans residues 264-356; the sequence is PVGFDLMDRK…NLWDTPDAER (93 aa). DNA-binding residues include R300, R319, and R324.

Belongs to the RuvB family. Homohexamer. Forms an RuvA(8)-RuvB(12)-Holliday junction (HJ) complex. HJ DNA is sandwiched between 2 RuvA tetramers; dsDNA enters through RuvA and exits via RuvB. An RuvB hexamer assembles on each DNA strand where it exits the tetramer. Each RuvB hexamer is contacted by two RuvA subunits (via domain III) on 2 adjacent RuvB subunits; this complex drives branch migration. In the full resolvosome a probable DNA-RuvA(4)-RuvB(12)-RuvC(2) complex forms which resolves the HJ.

The protein resides in the cytoplasm. It catalyses the reaction ATP + H2O = ADP + phosphate + H(+). In terms of biological role, the RuvA-RuvB-RuvC complex processes Holliday junction (HJ) DNA during genetic recombination and DNA repair, while the RuvA-RuvB complex plays an important role in the rescue of blocked DNA replication forks via replication fork reversal (RFR). RuvA specifically binds to HJ cruciform DNA, conferring on it an open structure. The RuvB hexamer acts as an ATP-dependent pump, pulling dsDNA into and through the RuvAB complex. RuvB forms 2 homohexamers on either side of HJ DNA bound by 1 or 2 RuvA tetramers; 4 subunits per hexamer contact DNA at a time. Coordinated motions by a converter formed by DNA-disengaged RuvB subunits stimulates ATP hydrolysis and nucleotide exchange. Immobilization of the converter enables RuvB to convert the ATP-contained energy into a lever motion, pulling 2 nucleotides of DNA out of the RuvA tetramer per ATP hydrolyzed, thus driving DNA branch migration. The RuvB motors rotate together with the DNA substrate, which together with the progressing nucleotide cycle form the mechanistic basis for DNA recombination by continuous HJ branch migration. Branch migration allows RuvC to scan DNA until it finds its consensus sequence, where it cleaves and resolves cruciform DNA. The chain is Holliday junction branch migration complex subunit RuvB from Burkholderia thailandensis (strain ATCC 700388 / DSM 13276 / CCUG 48851 / CIP 106301 / E264).